A 309-amino-acid chain; its full sequence is Probable (S)-ureidoglycine aminohydrolase (309 aa).

Positions 1 to 22 are cleaved as a signal peptide; sequence MMLPRLLLLVVASALPLASVAA. Mn(2+)-binding residues include glutamate 245, histidine 247, histidine 251, and glutamine 285. Residue glutamate 245 coordinates substrate. The substrate site is built by glutamine 285, tyrosine 297, and lysine 301.

This sequence belongs to the UGHY family. In terms of assembly, homooctamer. Requires Mn(2+) as cofactor.

Its subcellular location is the endoplasmic reticulum. The enzyme catalyses (S)-2-ureidoglycine + H2O = (S)-ureidoglycolate + NH4(+). In terms of biological role, involved in the catabolism of purine nucleotides. The sequential activity of AAH, UGLYAH and UAH allows a complete purine breakdown without the intermediate generation of urea. This Oryza sativa subsp. japonica (Rice) protein is Probable (S)-ureidoglycine aminohydrolase (UGLYAH).